The following is a 507-amino-acid chain: MIEQVLHYWYYVLPAFIIFHWIVSAIHTNSLRRKLGAKPFTHTQLDGFYGFKFGRDFLKAKRIGRQVDLINSRFPDDIDTFSSYTFGNHVIFTRDPENIKALLATQFNDFSLGGRIKFFKPLLGYGIFTLDGEGWKHSRAMLRPQFAREQLPMSPSLEPHFNVKAYPQEQRWVFDIQELFFRFTVDSATEFLFGESVNSLKSASIGCDEETELEERKKFAEAFNKAQEYISTRVALQQLYWFVNNSEFKECNEIVHKFTNYYVQKALDATPEELEKQSGYVFLYELVKQTRDPNVLRDHHSISLLAGRDTTAGLLSFAVFELARNPHIWAKLREDVESQFGLGEESRIEEITFESLKRCEYLKAVMNETLRLHPSVPRNARFALKDTTLPRGGGPDGKDPILVRKMSCSIFISGTQIDPKHYGKDAKLFRPERWFESSTRNLGWAYLPFNGGPRICLGQQFALTEAGYILVRLAQSFDTLELKPDTEYLTKISHLTMCLFGAFVKMD.

A helical membrane pass occupies residues 6–26; that stretch reads LHYWYYVLPAFIIFHWIVSAI. Cysteine 456 is a heme binding site.

Belongs to the cytochrome P450 family. Heme is required as a cofactor.

It localises to the membrane. Functionally, together with an NADPH cytochrome P450 the enzyme system catalyzes the terminal hydroxylation as the first step in the assimilation of alkanes and fatty acids. Preferentially hydroxylates lauric acid. This chain is Cytochrome P450 52A7 (CYP52A7), found in Candida tropicalis (Yeast).